Consider the following 156-residue polypeptide: 6,7-dimethyl-8-ribityllumazine synthase (156 aa).

5-amino-6-(D-ribitylamino)uracil-binding positions include Trp-28, 60–62 (SFE), and 82–84 (VVV). 87-88 (GT) contacts (2S)-2-hydroxy-3-oxobutyl phosphate. The active-site Proton donor is the His-90. Phe-115 provides a ligand contact to 5-amino-6-(D-ribitylamino)uracil. Position 129 (Arg-129) interacts with (2S)-2-hydroxy-3-oxobutyl phosphate.

The protein belongs to the DMRL synthase family.

The enzyme catalyses (2S)-2-hydroxy-3-oxobutyl phosphate + 5-amino-6-(D-ribitylamino)uracil = 6,7-dimethyl-8-(1-D-ribityl)lumazine + phosphate + 2 H2O + H(+). It participates in cofactor biosynthesis; riboflavin biosynthesis; riboflavin from 2-hydroxy-3-oxobutyl phosphate and 5-amino-6-(D-ribitylamino)uracil: step 1/2. In terms of biological role, catalyzes the formation of 6,7-dimethyl-8-ribityllumazine by condensation of 5-amino-6-(D-ribitylamino)uracil with 3,4-dihydroxy-2-butanone 4-phosphate. This is the penultimate step in the biosynthesis of riboflavin. This chain is 6,7-dimethyl-8-ribityllumazine synthase, found in Kocuria rhizophila (strain ATCC 9341 / DSM 348 / NBRC 103217 / DC2201).